The following is a 794-amino-acid chain: Solute carrier family 26 member 9 (794 aa).

Topologically, residues 1 to 70 (MNKVRPRYII…WLPKYNIKGN (70 aa)) are cytoplasmic. Residues 71-96 (LLNDALGGISAGTIQIPQGMAFALLA) form a helical membrane-spanning segment. Residues 97–100 (NLPP) are Extracellular-facing. A helical transmembrane segment spans residues 101 to 109 (VNGLYSSFF). Over 110-129 (PLVVYFFMGGIPQMVPGTFA) the chain is Cytoplasmic. Residues 130-142 (VISIIVGNVCLKL) traverse the membrane as a helical segment. The Extracellular portion of the chain corresponds to 143–160 (APESHFQNVTSNGTITNI). Residues 161-189 (EAMNTARMHISATLACLTAIIQIALSFVQ) traverse the membrane as a helical segment. Residues 190 to 199 (FGFVAIYLSE) lie on the Cytoplasmic side of the membrane. The chain crosses the membrane as a helical span at residues 200 to 222 (SFIRGFMTAAGLQILISVLKYIF). The Extracellular portion of the chain corresponds to 223–235 (GVSIPPYSGVLAI). Positions 236-244 (IYTFIDICK) form an intramembrane region, helical. The Extracellular segment spans residues 245 to 252 (ELPKTNVA). A helical transmembrane segment spans residues 253–273 (SLIFALISTVLLIIVKELNMK). Over 274 to 284 (FMHKIRFPIPM) the chain is Cytoplasmic. Residues 285 to 297 (EIIIVIVATAVSG) traverse the membrane as a helical segment. The Extracellular portion of the chain corresponds to 298-332 (SFKLPERYHMNVVGHIPLGFPSPTVPNVTQWDEMV). Residues 333–356 (GTAFSLAIVGYVINLAMGRTLGAK) form a helical membrane-spanning segment. Residues 357 to 363 (HGFDVDA) are Cytoplasmic-facing. Residues 364–377 (NQEMLALGSGNFFG) traverse the membrane as a helical segment. Over 378-388 (SFFFIHVICCA) the chain is Extracellular. Residues 389-398 (LSVTLAVDGA) traverse the membrane as a helical segment. The Cytoplasmic portion of the chain corresponds to 399 to 403 (GGKSQ). The helical transmembrane segment at 404–417 (IASFFVMMSVMVTI) threads the bilayer. Residues 418-429 (LALGTYLNPLPK) lie on the Extracellular side of the membrane. The helical transmembrane segment at 430-455 (SVLGALIAVNLKNSLKQLSDPFYLWK) threads the bilayer. At 456-459 (KSKL) the chain is on the cytoplasmic side. A helical transmembrane segment spans residues 460-474 (DCLVWLVSFFSTFIL). Residues 475-477 (GLP) lie on the Extracellular side of the membrane. The helical transmembrane segment at 478-496 (YGLAVGVAFSILVVIFNTQ) threads the bilayer. Topologically, residues 497–794 (FRNGSSLNQV…MFQTEIQTAL (298 aa)) are cytoplasmic. The STAS domain occupies 517 to 739 (VYSKVQPIDG…ITVHDAVLYA (223 aa)).

It belongs to the SLC26A/SulP transporter (TC 2.A.53) family. In terms of assembly, homodimer.

The protein localises to the cell membrane. The protein resides in the endomembrane system. It catalyses the reaction chloride(in) = chloride(out). It carries out the reaction hydrogencarbonate(in) + chloride(out) = hydrogencarbonate(out) + chloride(in). Inhibited by ammonium and thiosulfate. Its function is as follows. Ion transporter that can act both as an ion channel and anion exchanger. Mainly acts as a chloride channel, which mediate uncoupled chloride anion transport in an alternate-access mechanism where a saturable binding site is alternately exposed to either one or the other side of the membrane. Also acts as a DIDS- and thiosulfate- sensitive anion exchanger the exchange of chloride for bicarbonate ions across the cell membrane. This chain is Solute carrier family 26 member 9 (slc26a9), found in Xenopus tropicalis (Western clawed frog).